Here is a 265-residue protein sequence, read N- to C-terminus: ClpXP adapter protein SpxH (265 aa).

It belongs to the SpxH family. In terms of assembly, interacts with Spx.

It is found in the cytoplasm. Functionally, adapter protein required for efficient degradation of Spx by ClpXP under non-stress conditions. Interaction with Spx stabilizes Spx and exposes the C-terminus of Spx for recognition and proteolysis by ClpXP. The protein is ClpXP adapter protein SpxH of Staphylococcus epidermidis (strain ATCC 35984 / DSM 28319 / BCRC 17069 / CCUG 31568 / BM 3577 / RP62A).